The sequence spans 883 residues: Alanine--tRNA ligase (883 aa).

Histidine 563, histidine 567, cysteine 677, and histidine 681 together coordinate Zn(2+).

Belongs to the class-II aminoacyl-tRNA synthetase family. Zn(2+) serves as cofactor.

It is found in the cytoplasm. It carries out the reaction tRNA(Ala) + L-alanine + ATP = L-alanyl-tRNA(Ala) + AMP + diphosphate. Catalyzes the attachment of alanine to tRNA(Ala) in a two-step reaction: alanine is first activated by ATP to form Ala-AMP and then transferred to the acceptor end of tRNA(Ala). Also edits incorrectly charged Ser-tRNA(Ala) and Gly-tRNA(Ala) via its editing domain. This is Alanine--tRNA ligase from Cereibacter sphaeroides (strain ATCC 17029 / ATH 2.4.9) (Rhodobacter sphaeroides).